The chain runs to 285 residues: Eukaryotic translation initiation factor 3 subunit F-2 (285 aa).

Residues 11-145 (VYLKPLVFFQ…TRLYCAVEMG (135 aa)) form the MPN domain.

It belongs to the eIF-3 subunit F family. As to quaternary structure, component of the eukaryotic translation initiation factor 3 (eIF-3) complex. The eIF-3 complex interacts with pix.

It is found in the cytoplasm. Component of the eukaryotic translation initiation factor 3 (eIF-3) complex, which is involved in protein synthesis of a specialized repertoire of mRNAs and, together with other initiation factors, stimulates binding of mRNA and methionyl-tRNAi to the 40S ribosome. The eIF-3 complex specifically targets and initiates translation of a subset of mRNAs involved in cell proliferation. This is Eukaryotic translation initiation factor 3 subunit F-2 from Drosophila melanogaster (Fruit fly).